Here is a 61-residue protein sequence, read N- to C-terminus: Large ribosomal subunit protein uL29 (61 aa).

This sequence belongs to the universal ribosomal protein uL29 family.

The protein is Large ribosomal subunit protein uL29 of Campylobacter lari (strain RM2100 / D67 / ATCC BAA-1060).